A 178-amino-acid polypeptide reads, in one-letter code: E1B protein, small T-antigen (178 aa).

It belongs to the adenoviridae E1B 19 kDa protein family.

The protein localises to the host cell membrane. It is found in the host nucleus envelope. It localises to the host nucleus lamina. Putative adenovirus Bcl-2 homolog that inhibits apoptosis induced by TNF or FAS pathways, as well as p53-mediated apoptosis. Without E1B 19K function, virus production is compromised because of premature death of host cell. Interacts with Bax protein in cell lysates. This chain is E1B protein, small T-antigen, found in Human adenovirus B serotype 7 (HAdV-7).